Consider the following 397-residue polypeptide: Acetate kinase (397 aa).

Position 7 (asparagine 7) interacts with Mg(2+). Lysine 14 is a binding site for ATP. A substrate-binding site is contributed by arginine 91. Aspartate 148 acts as the Proton donor/acceptor in catalysis. ATP-binding positions include 208–212 (HLGNG), 283–285 (DFR), and 331–335 (GLGEN). A Mg(2+)-binding site is contributed by glutamate 383.

Belongs to the acetokinase family. Homodimer. Requires Mg(2+) as cofactor. It depends on Mn(2+) as a cofactor.

It is found in the cytoplasm. It catalyses the reaction acetate + ATP = acetyl phosphate + ADP. It functions in the pathway metabolic intermediate biosynthesis; acetyl-CoA biosynthesis; acetyl-CoA from acetate: step 1/2. Catalyzes the formation of acetyl phosphate from acetate and ATP. Can also catalyze the reverse reaction. The protein is Acetate kinase of Heliobacterium modesticaldum (strain ATCC 51547 / Ice1).